The primary structure comprises 257 residues: 5-keto-4-deoxy-D-glucarate aldolase (257 aa).

His-51 serves as the catalytic Proton acceptor. Gln-152 is a substrate binding site. Glu-154 serves as a coordination point for Mg(2+). Substrate contacts are provided by Ser-179 and Asp-180. Asp-180 serves as a coordination point for Mg(2+).

It belongs to the HpcH/HpaI aldolase family. KDGluc aldolase subfamily. As to quaternary structure, homohexamer; trimer of dimers. Mg(2+) serves as cofactor.

The catalysed reaction is 5-dehydro-4-deoxy-D-glucarate = 2-hydroxy-3-oxopropanoate + pyruvate. The enzyme catalyses 2-dehydro-3-deoxy-D-glucarate = 2-hydroxy-3-oxopropanoate + pyruvate. The protein operates within carbohydrate acid metabolism; galactarate degradation; D-glycerate from galactarate: step 2/3. Its function is as follows. Catalyzes the reversible retro-aldol cleavage of both 5-keto-4-deoxy-D-glucarate and 2-keto-3-deoxy-D-glucarate to pyruvate and tartronic semialdehyde. This chain is 5-keto-4-deoxy-D-glucarate aldolase, found in Citrobacter koseri (strain ATCC BAA-895 / CDC 4225-83 / SGSC4696).